A 435-amino-acid polypeptide reads, in one-letter code: ATP-dependent protease ATPase subunit HslU (435 aa).

ATP is bound by residues Ile18, 60–65 (GVGKTE), Asp248, Glu313, and Arg385.

The protein belongs to the ClpX chaperone family. HslU subfamily. As to quaternary structure, a double ring-shaped homohexamer of HslV is capped on each side by a ring-shaped HslU homohexamer. The assembly of the HslU/HslV complex is dependent on binding of ATP.

It is found in the cytoplasm. In terms of biological role, ATPase subunit of a proteasome-like degradation complex; this subunit has chaperone activity. The binding of ATP and its subsequent hydrolysis by HslU are essential for unfolding of protein substrates subsequently hydrolyzed by HslV. HslU recognizes the N-terminal part of its protein substrates and unfolds these before they are guided to HslV for hydrolysis. This is ATP-dependent protease ATPase subunit HslU from Sinorhizobium medicae (strain WSM419) (Ensifer medicae).